Consider the following 229-residue polypeptide: 7-cyano-7-deazaguanine synthase (229 aa).

An ATP-binding site is contributed by 9-19 (LSGGLDSTTVL). 4 residues coordinate Zn(2+): cysteine 192, cysteine 202, cysteine 205, and cysteine 208.

The protein belongs to the QueC family. It depends on Zn(2+) as a cofactor.

The enzyme catalyses 7-carboxy-7-deazaguanine + NH4(+) + ATP = 7-cyano-7-deazaguanine + ADP + phosphate + H2O + H(+). It participates in purine metabolism; 7-cyano-7-deazaguanine biosynthesis. Its function is as follows. Catalyzes the ATP-dependent conversion of 7-carboxy-7-deazaguanine (CDG) to 7-cyano-7-deazaguanine (preQ(0)). The chain is 7-cyano-7-deazaguanine synthase from Kineococcus radiotolerans (strain ATCC BAA-149 / DSM 14245 / SRS30216).